Reading from the N-terminus, the 356-residue chain is Cyanide hydratase (356 aa).

The region spanning Tyr6–Leu285 is the CN hydrolase domain. Residue Glu46 is the Proton acceptor of the active site. Residue Lys128 is part of the active site. Residue Cys163 is the Nucleophile of the active site.

Belongs to the carbon-nitrogen hydrolase superfamily. Nitrilase family. Oligomer of dimers, forming left-handed helical fibers.

It catalyses the reaction formamide = hydrogen cyanide + H2O. Its function is as follows. Catalyzes the hydration of cyanide to formamide. Degradation of cyanide may be important for plant pathogenic fungi in infection of cyanogenic plants. The polypeptide is Cyanide hydratase (Leptosphaeria maculans (Blackleg fungus)).